We begin with the raw amino-acid sequence, 264 residues long: Diphthine synthase (264 aa).

S-adenosyl-L-methionine contacts are provided by residues leucine 10, aspartate 87, valine 90, 115–116 (SI), leucine 166, alanine 209, and histidine 234.

This sequence belongs to the diphthine synthase family. Homodimer.

The catalysed reaction is 2-[(3S)-amino-3-carboxypropyl]-L-histidyl-[translation elongation factor 2] + 3 S-adenosyl-L-methionine = diphthine-[translation elongation factor 2] + 3 S-adenosyl-L-homocysteine + 3 H(+). The protein operates within protein modification; peptidyl-diphthamide biosynthesis. In terms of biological role, S-adenosyl-L-methionine-dependent methyltransferase that catalyzes the trimethylation of the amino group of the modified target histidine residue in translation elongation factor 2 (EF-2), to form an intermediate called diphthine. The three successive methylation reactions represent the second step of diphthamide biosynthesis. The sequence is that of Diphthine synthase from Thermococcus onnurineus (strain NA1).